A 256-amino-acid polypeptide reads, in one-letter code: Ubiquinone/menaquinone biosynthesis C-methyltransferase UbiE (256 aa).

Positions 1–19 are enriched in polar residues; sequence MQNRSSSPDSSSAGNTHFG. The tract at residues 1-24 is disordered; the sequence is MQNRSSSPDSSSAGNTHFGFQSVP. S-adenosyl-L-methionine is bound by residues threonine 81, aspartate 102, and 128–129; that span reads DA.

The protein belongs to the class I-like SAM-binding methyltransferase superfamily. MenG/UbiE family.

It carries out the reaction a 2-demethylmenaquinol + S-adenosyl-L-methionine = a menaquinol + S-adenosyl-L-homocysteine + H(+). The enzyme catalyses a 2-methoxy-6-(all-trans-polyprenyl)benzene-1,4-diol + S-adenosyl-L-methionine = a 5-methoxy-2-methyl-3-(all-trans-polyprenyl)benzene-1,4-diol + S-adenosyl-L-homocysteine + H(+). The protein operates within quinol/quinone metabolism; menaquinone biosynthesis; menaquinol from 1,4-dihydroxy-2-naphthoate: step 2/2. It functions in the pathway cofactor biosynthesis; ubiquinone biosynthesis. In terms of biological role, methyltransferase required for the conversion of demethylmenaquinol (DMKH2) to menaquinol (MKH2) and the conversion of 2-polyprenyl-6-methoxy-1,4-benzoquinol (DDMQH2) to 2-polyprenyl-3-methyl-6-methoxy-1,4-benzoquinol (DMQH2). In Bordetella avium (strain 197N), this protein is Ubiquinone/menaquinone biosynthesis C-methyltransferase UbiE.